Consider the following 219-residue polypeptide: Flagellin B4 (219 aa).

Residues 1-5 (MHRKG) constitute a propeptide that is removed on maturation.

This sequence belongs to the archaeal flagellin family.

Its subcellular location is the archaeal flagellum. Flagellin is the subunit protein which polymerizes to form the filaments of archaeal flagella. The chain is Flagellin B4 (flaB4) from Pyrococcus abyssi (strain GE5 / Orsay).